The following is a 405-amino-acid chain: Diaminohydroxyphosphoribosylamino-pyrimidine deaminase (405 aa).

The region spanning Tyr-256 to Val-383 is the CMP/dCMP-type deaminase domain. His-305 lines the Zn(2+) pocket. Glu-307 (proton donor) is an active-site residue. Positions 335 and 345 each coordinate Zn(2+).

This sequence belongs to the cytidine and deoxycytidylate deaminase family. Zn(2+) serves as cofactor.

The protein resides in the cytoplasm. It is found in the nucleus. It carries out the reaction 2,5-diamino-6-hydroxy-4-(5-phosphoribosylamino)-pyrimidine + H2O + H(+) = 5-amino-6-(5-phospho-D-ribosylamino)uracil + NH4(+). Its pathway is cofactor biosynthesis; riboflavin biosynthesis; 5-amino-6-(D-ribitylamino)uracil from GTP: step 2/4. In terms of biological role, involved in riboflavin biosynthesis. Converts 2,5-diamino-6-(ribosylamino)-4(3H)-pyrimidinone 5'-phosphate into 5-amino-6-(ribosylamino)-2,4(1H,3H)-pyrimidinedione 5'-phosphate. This is Diaminohydroxyphosphoribosylamino-pyrimidine deaminase from Schizosaccharomyces pombe (strain 972 / ATCC 24843) (Fission yeast).